We begin with the raw amino-acid sequence, 473 residues long: Glucose facilitated diffusion protein (473 aa).

Residues 1-13 (MSSESSQGLVTRL) lie on the Cytoplasmic side of the membrane. The helical transmembrane segment at 14-34 (ALIAAIGGLLFGYDSAVIAAI) threads the bilayer. Over 35–59 (GTPVDIHFIAPRHLSATAAASLSGM) the chain is Periplasmic. A helical transmembrane segment spans residues 60–80 (VVVAVLVGCVTGSLLSGWIGI). The Cytoplasmic portion of the chain corresponds to 81–85 (RFGRR). The helical transmembrane segment at 86 to 106 (GGLLMSSICFVAAGFGAALTE) threads the bilayer. Residues 107–112 (KLFGTG) lie on the Periplasmic side of the membrane. The helical transmembrane segment at 113–133 (GSALQIFCFFRFLAGLGIGVV) threads the bilayer. At 134–158 (STLTPTYIAEIAPPDKRGQMVSGQQ) the chain is on the cytoplasmic side. A helical transmembrane segment spans residues 159 to 179 (MAIVTGALTGYIFTWLLAHFG). The Periplasmic segment spans residues 180 to 187 (SIDWVNAS). Residues 188–208 (GWCWSPASEGLIGIAFLLLLL) traverse the membrane as a helical segment. Over 209–257 (TAPDTPHWLVMKGRHSEASKILARLEPQADPNLTIQKIKAGFDKAMDKS) the chain is Cytoplasmic. A helical membrane pass occupies residues 258–278 (SAGLFAFGITVVFAGVSVAAF). Topologically, residues 279 to 303 (QQLVGINAVLYYAPQMFQNLGFGAD) are periplasmic. A helical transmembrane segment spans residues 304–324 (TALLQTISIGVVNFIFTMIAS). At 325–335 (RVVDRFGRKPL) the chain is on the cytoplasmic side. The chain crosses the membrane as a helical span at residues 336-356 (LIWGALGMAAMMAVLGCCFWF). The Periplasmic segment spans residues 357–366 (KVGGVLPLAS). Residues 367–387 (VLLYIAVFGMSWGPVCWVVLS) form a helical membrane-spanning segment. The Cytoplasmic segment spans residues 388–396 (EMFPSSIKG). Residues 397–417 (AAMPIAVTGQWLANILVNFLF) form a helical membrane-spanning segment. Residues 418–429 (KVADGSPALNQT) are Periplasmic-facing. The helical transmembrane segment at 430–450 (FNHGFSYLVFAALSILGGLIV) threads the bilayer. Residues 451 to 473 (ARFVPETKGRSLDEIEEMWRSQK) lie on the Cytoplasmic side of the membrane.

The protein belongs to the major facilitator superfamily. Sugar transporter (TC 2.A.1.1) family.

The protein localises to the cell inner membrane. Its function is as follows. Allows uptake of glucose by the cell; allows growth on glucose minimal medium by E.coli cells impaired in glucose transport. Also transports fructose, but has a strong preference for glucose. The sequence is that of Glucose facilitated diffusion protein from Zymomonas mobilis subsp. mobilis (strain ATCC 31821 / ZM4 / CP4).